The primary structure comprises 782 residues: Coiled-coil alpha-helical rod protein 1 (782 aa).

2 stretches are compositionally biased toward basic and acidic residues: residues 62–74 (ERDV…EPGR) and 208–218 (ETRRAGEAKEL). Disordered stretches follow at residues 62–82 (ERDV…WGLE) and 177–218 (EQLS…AKEL). 3 coiled-coil regions span residues 111-303 (LRET…SLTH), 344-437 (LMVQ…NAVS), and 498-691 (VTDV…QQEG).

In terms of tissue distribution, found in all tissues tested, abundantly expressed in heart, liver, skeletal muscle, kidney and pancreas, and to a lesser extent in lung and placenta. Overexpressed in keratinocytes of psoriatic lesions.

The protein resides in the cytoplasm. The protein localises to the nucleus. Functionally, may be a regulator of keratinocyte proliferation or differentiation. In Homo sapiens (Human), this protein is Coiled-coil alpha-helical rod protein 1 (CCHCR1).